A 370-amino-acid chain; its full sequence is Sensor protein GtcS (370 aa).

The next 2 membrane-spanning stretches (helical) occupy residues 2 to 22 (ITAYILFTVTVGVTNSIVFYL) and 40 to 60 (AWIVAWRLMEMVIFALSVYLY). The region spanning 66–118 (KRITGPLEKITDAIQKMREGEFAQRLCFKADYELTLIQEHFNEMVAHLEKTEA) is the HAMP domain. A Histidine kinase domain is found at 133–355 (DLSHDFKTPI…RLENDLPYRL (223 aa)).

It localises to the cell membrane. It catalyses the reaction ATP + protein L-histidine = ADP + protein N-phospho-L-histidine.. Functionally, member of the two-component regulatory system GtcS/GtcR which may act in the control of the transcription of the grs operon which encodes the multienzymes involved in the biosynthesis of the peptide antibiotic gramicidin S. Probably activates GtcR by phosphorylation. This is Sensor protein GtcS (gtcS) from Aneurinibacillus migulanus (Bacillus migulanus).